Consider the following 96-residue polypeptide: Probable quinol oxidase subunit 4 (96 aa).

Transmembrane regions (helical) follow at residues 8 to 28 (TVGFIASIVLTILAVFVTLYT), 36 to 56 (ITIIFGFAFIQAAVQLLMFMH), and 68 to 88 (FKVLFAIIITLITVIGTYWVM).

Belongs to the cytochrome c oxidase bacterial subunit 4 family.

The protein resides in the cell membrane. The catalysed reaction is 2 a quinol + O2 = 2 a quinone + 2 H2O. Its function is as follows. Catalyzes quinol oxidation with the concomitant reduction of oxygen to water. In Staphylococcus saprophyticus subsp. saprophyticus (strain ATCC 15305 / DSM 20229 / NCIMB 8711 / NCTC 7292 / S-41), this protein is Probable quinol oxidase subunit 4 (qoxD).